Reading from the N-terminus, the 1632-residue chain is uncharacterized protein (1632 aa).

Positions 1-15 (MSNNKQTAAPAATSN) are enriched in polar residues. The interval 1-23 (MSNNKQTAAPAATSNEKAENGAE) is disordered. At 1–63 (MSNNKQTAAP…TKDAFKGKYR (63 aa)) the chain is on the cytoplasmic side. Residues 64–86 (VFYGNGLHTSIMFGAGTAALDLM) form a helical membrane-spanning segment. Over 87–1632 (TPGSFLPPFP…ESDGEEMSGE (1546 aa)) the chain is Extracellular. 2 N-linked (GlcNAc...) asparagine; by host glycosylation sites follow: N149 and N274. The interval 516-538 (ELSSQLGDTDTKKEQKEKRSKQG) is disordered. N654, N719, and N797 each carry an N-linked (GlcNAc...) asparagine; by host glycan. The disordered stretch occupies residues 838–890 (IKGTKKSDDGDSKTDGSGDMEDDFTSLAKMTNRKRKAGGKDGPSKKKKKDGAD). Composition is skewed to basic and acidic residues over residues 842–853 (KKSDDGDSKTDG) and 875–890 (GGKD…DGAD). N1012, N1031, N1261, N1339, N1511, and N1546 each carry an N-linked (GlcNAc...) asparagine; by host glycan. The tract at residues 1603–1632 (PSAMDVDEDEDEDMDDESDDESDGEEMSGE) is disordered. Acidic residues predominate over residues 1607–1632 (DVDEDEDEDMDDESDDESDGEEMSGE).

It is found in the host membrane. This is an uncharacterized protein from Ostreid herpesvirus 1 (isolate France) (OsHV-1).